The primary structure comprises 192 residues: Sarcoplasmic calcium-binding protein, beta chain (192 aa).

Ala-1 is modified (N-acetylalanine). EF-hand domains lie at 4-39 (WDNR…VTLI), 56-91 (IMAN…NCKG), 100-135 (AFKV…RSAF), and 136-171 (ADVK…YAQF). The Ca(2+) site is built by Asp-17, Asp-19, Asp-21, Asp-28, Asp-69, Asn-71, Asp-73, Glu-75, Glu-80, Asp-113, Asp-115, Asp-117, Met-119, and Glu-124.

As to quaternary structure, SCPs from crayfish, lobster, and shrimp are polymorphic dimers; three isotypes (alpha-alpha, alpha-beta, and beta-beta) have been identified.

Like parvalbumins, SCPs seem to be more abundant in fast contracting muscles, but no functional relationship can be established from this distribution. The sequence is that of Sarcoplasmic calcium-binding protein, beta chain from Penaeus sp. (Penoeid shrimp).